A 1214-amino-acid polypeptide reads, in one-letter code: Filamin-A-interacting protein 1 (1214 aa).

Positions 1–15 are enriched in polar residues; it reads MRSRNQGGESSSNGH. The interval 1-73 is disordered; it reads MRSRNQGGES…ESEKKTKKPL (73 aa). Composition is skewed to basic and acidic residues over residues 32–47 and 61–73; these read PSED…KGED and PSGE…KKPL. The residue at position 138 (Ser138) is a Phosphoserine. 2 coiled-coil regions span residues 192–581 and 624–778; these read DYMN…KLRS and PEDN…ELEL. 2 disordered regions span residues 875–898 and 949–976; these read KREN…GHPG and KPRI…GPER. At Ser979 the chain carries Phosphoserine. Residues 1104 to 1192 are disordered; sequence VSTGTVLRSP…TKFQPRAETQ (89 aa). Residues 1126–1140 show a composition bias toward low complexity; it reads VTSTITITPVTTSST. A compositionally biased stretch (polar residues) spans 1141-1157; sequence RGTQSVSGQDGSSQRPT. Residues 1169 to 1180 show a composition bias toward low complexity; that stretch reads AGKPVVAAPGAG.

This sequence belongs to the FILIP1 family. In terms of assembly, interacts with FLNA. Interacts with RHOD (in GTP-bound form).

The protein localises to the cytoplasm. It localises to the cytoskeleton. Its function is as follows. By acting through a filamin-A/F-actin axis, it controls the start of neocortical cell migration from the ventricular zone. May be able to induce the degradation of filamin-A. This Mus musculus (Mouse) protein is Filamin-A-interacting protein 1 (Filip1).